Here is a 240-residue protein sequence, read N- to C-terminus: Uridylate kinase (240 aa).

12 to 15 lines the ATP pocket; sequence KLSG. The segment at 20-25 is involved in allosteric activation by GTP; sequence GEQGNG. Residue G54 participates in UMP binding. Residues G55 and R59 each coordinate ATP. UMP contacts are provided by residues D74 and 135–142; that span reads TGNPYFST. 3 residues coordinate ATP: N163, Y169, and D172.

It belongs to the UMP kinase family. As to quaternary structure, homohexamer. Interacts with BrxC.

The protein localises to the cytoplasm. It catalyses the reaction UMP + ATP = UDP + ADP. It participates in pyrimidine metabolism; CTP biosynthesis via de novo pathway; UDP from UMP (UMPK route): step 1/1. With respect to regulation, allosterically activated by GTP. Can also be activated by dGTP and 3'-anthraniloyl-2'-deoxyguanosine-5'-triphosphate (Ant-dGTP). Inhibited by UTP, 5-bromo-UTP and 5-iodo-UTP. In terms of biological role, catalyzes the reversible phosphorylation of UMP to UDP, with ATP or dATP as the most efficient phosphate donors. Is also able to phosphorylate 5-fluoro-UMP and 6-aza-UMP. The chain is Uridylate kinase (pyrH) from Bacillus subtilis (strain 168).